Consider the following 750-residue polypeptide: Photosystem I P700 chlorophyll a apoprotein A1 (750 aa).

The next 8 membrane-spanning stretches (helical) occupy residues 70–93 (VFSAHFGQLSIIFLWLSGMYFHGA), 156–179 (LYCTAIGALVFAALMLFAGWFHYH), 195–219 (LNHHLAGLLGLGSLSWAGHQVHVSL), 291–309 (IAHHHLAIAILFLIAGHMY), 346–369 (WHAQLALNLAMLGSLTIVVAHHMY), 385–411 (LSLFTHHMWIGGFLIVGAAAHAAIFMV), 433–455 (AIISHLNWVCIFLGFHSFGLYIH), and 531–549 (FLVHHIHAFTIHVTVLILL). 2 residues coordinate [4Fe-4S] cluster: Cys573 and Cys582. Helical transmembrane passes span 589–610 (HVFLGLFWMYNAISVVIFHFSW) and 664–686 (LSAYGLFFLGAHFVWAFSLMFLF). His675 contributes to the chlorophyll a' binding site. Residues Met683 and Tyr691 each contribute to the chlorophyll a site. Trp692 is a binding site for phylloquinone. The helical transmembrane segment at 724–744 (AVGVTHYLLGGIATTWAFFLA) threads the bilayer.

The protein belongs to the PsaA/PsaB family. As to quaternary structure, the PsaA/B heterodimer binds the P700 chlorophyll special pair and subsequent electron acceptors. PSI consists of a core antenna complex that captures photons, and an electron transfer chain that converts photonic excitation into a charge separation. The eukaryotic PSI reaction center is composed of at least 11 subunits. P700 is a chlorophyll a/chlorophyll a' dimer, A0 is one or more chlorophyll a, A1 is one or both phylloquinones and FX is a shared 4Fe-4S iron-sulfur center. is required as a cofactor.

The protein resides in the plastid. It is found in the chloroplast thylakoid membrane. The enzyme catalyses reduced [plastocyanin] + hnu + oxidized [2Fe-2S]-[ferredoxin] = oxidized [plastocyanin] + reduced [2Fe-2S]-[ferredoxin]. PsaA and PsaB bind P700, the primary electron donor of photosystem I (PSI), as well as the electron acceptors A0, A1 and FX. PSI is a plastocyanin-ferredoxin oxidoreductase, converting photonic excitation into a charge separation, which transfers an electron from the donor P700 chlorophyll pair to the spectroscopically characterized acceptors A0, A1, FX, FA and FB in turn. Oxidized P700 is reduced on the lumenal side of the thylakoid membrane by plastocyanin. This chain is Photosystem I P700 chlorophyll a apoprotein A1, found in Nymphaea alba (White water-lily).